Here is a 110-residue protein sequence, read N- to C-terminus: U9-agatoxin-Ao1a (110 aa).

The N-terminal stretch at 1 to 17 (MKLLLAIAGLFLVQTLA) is a signal peptide. A propeptide spanning residues 18–38 (EDVRAHEESSFLAAVAPEEQR) is cleaved from the precursor. 5 cysteine pairs are disulfide-bonded: C40–C54, C47–C60, C51–C87, C53–C72, and C62–C70.

The protein belongs to the neurotoxin 37 family. As to expression, expressed by the venom gland.

Its subcellular location is the secreted. This Agelena orientalis (Funnel-web spider) protein is U9-agatoxin-Ao1a.